Here is a 246-residue protein sequence, read N- to C-terminus: ATP synthase subunit a, chloroplastic (246 aa).

The next 5 helical transmembrane spans lie at 35–55 (GQVL…GLIA), 94–114 (VPFI…GALL), 132–152 (DINT…YAGI), 198–218 (LVVG…VMLL), and 219–239 (GVFT…AYIG).

Belongs to the ATPase A chain family. In terms of assembly, F-type ATPases have 2 components, CF(1) - the catalytic core - and CF(0) - the membrane proton channel. CF(1) has five subunits: alpha(3), beta(3), gamma(1), delta(1), epsilon(1). CF(0) has four main subunits: a, b, b' and c.

The protein localises to the plastid. Its subcellular location is the chloroplast thylakoid membrane. Functionally, key component of the proton channel; it plays a direct role in the translocation of protons across the membrane. The polypeptide is ATP synthase subunit a, chloroplastic (Stigeoclonium helveticum (Green alga)).